Reading from the N-terminus, the 110-residue chain is MEAKAVSRFVRMSPRKVRLVADEIRGYAVNEALDILKFTNKRAIEPLTKVILSASANASVLNNKVDFNQLFIKKIYVDEGPIMKRFRPRARGRAARIRKRLSHITVVLSD.

It belongs to the universal ribosomal protein uL22 family. Part of the 50S ribosomal subunit.

This protein binds specifically to 23S rRNA; its binding is stimulated by other ribosomal proteins, e.g. L4, L17, and L20. It is important during the early stages of 50S assembly. It makes multiple contacts with different domains of the 23S rRNA in the assembled 50S subunit and ribosome. Its function is as follows. The globular domain of the protein is located near the polypeptide exit tunnel on the outside of the subunit, while an extended beta-hairpin is found that lines the wall of the exit tunnel in the center of the 70S ribosome. This Leptospira interrogans serogroup Icterohaemorrhagiae serovar copenhageni (strain Fiocruz L1-130) protein is Large ribosomal subunit protein uL22.